Reading from the N-terminus, the 169-residue chain is Endoribonuclease YbeY (169 aa).

Positions 128, 132, and 138 each coordinate Zn(2+).

This sequence belongs to the endoribonuclease YbeY family. It depends on Zn(2+) as a cofactor.

The protein localises to the cytoplasm. In terms of biological role, single strand-specific metallo-endoribonuclease involved in late-stage 70S ribosome quality control and in maturation of the 3' terminus of the 16S rRNA. This is Endoribonuclease YbeY from Rhizorhabdus wittichii (strain DSM 6014 / CCUG 31198 / JCM 15750 / NBRC 105917 / EY 4224 / RW1) (Sphingomonas wittichii).